A 323-amino-acid chain; its full sequence is UDP-N-acetylenolpyruvoylglucosamine reductase (323 aa).

In terms of domain architecture, FAD-binding PCMH-type spans 52–217 (KSGGAADWLF…VSARLQGEPG (166 aa)). Residue Arg-197 is part of the active site. Positions 234–253 (EQSQPVRTKTGGSTFKNPPG) are disordered. Over residues 235 to 249 (QSQPVRTKTGGSTFK) the composition is skewed to polar residues. Ser-246 functions as the Proton donor in the catalytic mechanism. The active site involves Glu-316.

Belongs to the MurB family. FAD is required as a cofactor.

It localises to the cytoplasm. The catalysed reaction is UDP-N-acetyl-alpha-D-muramate + NADP(+) = UDP-N-acetyl-3-O-(1-carboxyvinyl)-alpha-D-glucosamine + NADPH + H(+). It participates in cell wall biogenesis; peptidoglycan biosynthesis. In terms of biological role, cell wall formation. The sequence is that of UDP-N-acetylenolpyruvoylglucosamine reductase from Erythrobacter litoralis (strain HTCC2594).